A 254-amino-acid polypeptide reads, in one-letter code: Acetylglutamate kinase (254 aa).

Residues 40 to 41 (GG), Arg-62, and Asn-154 contribute to the substrate site. Residues 177–182 (DVSGIL) and 205–207 (IIT) contribute to the ATP site.

It belongs to the acetylglutamate kinase family. ArgB subfamily. As to quaternary structure, homodimer.

The protein resides in the cytoplasm. The catalysed reaction is N-acetyl-L-glutamate + ATP = N-acetyl-L-glutamyl 5-phosphate + ADP. The protein operates within amino-acid biosynthesis; L-arginine biosynthesis; N(2)-acetyl-L-ornithine from L-glutamate: step 2/4. Its function is as follows. Catalyzes the ATP-dependent phosphorylation of N-acetyl-L-glutamate. This Yersinia enterocolitica serotype O:8 / biotype 1B (strain NCTC 13174 / 8081) protein is Acetylglutamate kinase.